Reading from the N-terminus, the 233-residue chain is Preprocaerulein type-4 (233 aa).

Positions 1-26 (MFKGILLCVLFAVLSANPLSQPEGFA) are cleaved as a signal peptide. A propeptide spanning residues 27–72 (DEERDVRGLASLLGKALKATLKIGTHFLGGAPQQREANDERRFADG) is cleaved from the precursor. Gln73 is modified (pyrrolidone carboxylic acid). At Tyr76 the chain carries Sulfotyrosine. At Phe82 the chain carries Phenylalanine amide. A propeptide spanning residues 86–87 (DG) is cleaved from the precursor. Gln88 bears the Pyrrolidone carboxylic acid mark. A Sulfotyrosine modification is found at Tyr91. The residue at position 97 (Phe97) is a Phenylalanine amide. Positions 101 to 151 (DDEDDVHERDVRGFGSFLGKALKAALKIGANALGGAPQQREANDERRFADG) are excised as a propeptide. A Pyrrolidone carboxylic acid modification is found at Gln152. At Tyr155 the chain carries Sulfotyrosine. Phe161 carries the post-translational modification Phenylalanine amide. Positions 165–215 (DDEDDVNERDVRGFGSFLGKALKAALKIGANALGGSPQQREANDERRFADG) are excised as a propeptide. The interval 197 to 233 (LGGSPQQREANDERRFADGQQDYTGWMDFGRRNGEDD) is disordered. Pyrrolidone carboxylic acid is present on Gln216. Tyr219 is subject to Sulfotyrosine. Phe225 bears the Phenylalanine amide mark. The propeptide occupies 229–233 (NGEDD).

The protein belongs to the gastrin/cholecystokinin family. In terms of tissue distribution, expressed by the skin glands.

It localises to the secreted. The pharmacological activities of caerulein are quite similar to the physiological activities of gastrin and related peptides. The sequence is that of Preprocaerulein type-4 from Xenopus laevis (African clawed frog).